The chain runs to 444 residues: MAKLFGTDGVRGVANTELTAELAFRLGRAGAHVLTRQGHSKKIIIGRDTRISGDMLEAALVAGICSVGVDVYKIGVLPTPGIAYLTRKLGAGAGVVISASHNPVQDNGIKFFGPSGYKLPDELESQIEKLALDDQAELPRPTGGELGRLYYVEDAVDQYVDFAKATISTDLKGLKIVVDCANGAAYAVAPRILSELGAEVIPIFHRPDGVNINAHCGSTHPETLMEEVVKQGADLGLAHDGDADRVLAVDHLGNLVDGDQIMVLCAKHLKSKGKLRKNTTVVTVMSNLGLYKALERSGIEVVETKVGDRYVLEKLLETGARFGGEQSGHIIFLQHNTTGDGIITALQLLAVVKETGMSLAQLAGQMERYPQILKNVQVKDKNYVMNSPIISEAIRRFERDLAGQGRILVRPSGTEPLVRIMVEGKDMAELQSIVDKMAEIVGNI.

Catalysis depends on Ser-100, which acts as the Phosphoserine intermediate. Residues Ser-100, Asp-240, Asp-242, and Asp-244 each contribute to the Mg(2+) site. Position 100 is a phosphoserine (Ser-100).

It belongs to the phosphohexose mutase family. Requires Mg(2+) as cofactor. Activated by phosphorylation.

It catalyses the reaction alpha-D-glucosamine 1-phosphate = D-glucosamine 6-phosphate. In terms of biological role, catalyzes the conversion of glucosamine-6-phosphate to glucosamine-1-phosphate. The polypeptide is Phosphoglucosamine mutase (Desulforamulus reducens (strain ATCC BAA-1160 / DSM 100696 / MI-1) (Desulfotomaculum reducens)).